Consider the following 407-residue polypeptide: Arrestin red cell isoform 1 (407 aa).

Belongs to the arrestin family.

It is found in the cytoplasm. The polypeptide is Arrestin red cell isoform 1 (Oncorhynchus mykiss (Rainbow trout)).